We begin with the raw amino-acid sequence, 265 residues long: MMGRIESVFAKKGKSAFIGFTVAGDPDKETSIRIAKALIDGGTDILEFGVPFSDPVADGPTIQRADDRALASCTTPDTIFAIVREVRAYSEVPIVFLTYYNTIYRRGIDRFYLEAHEAGVDGILVADMPVEESDEVAATAEKYGIDPIFLVTQTTSNERMDTIVRHARGYLYLVSVLGVTGARKTVAPEALALLNRVRSHTDLPLAIGFGISTPEHVTTCNLAGADGVIVGSAIVDIVEKNLGNPDAMEQDLRRYVSVMKKAAEQ.

Residues E47 and D58 each act as proton acceptor in the active site.

Belongs to the TrpA family. Tetramer of two alpha and two beta chains.

It carries out the reaction (1S,2R)-1-C-(indol-3-yl)glycerol 3-phosphate + L-serine = D-glyceraldehyde 3-phosphate + L-tryptophan + H2O. It participates in amino-acid biosynthesis; L-tryptophan biosynthesis; L-tryptophan from chorismate: step 5/5. In terms of biological role, the alpha subunit is responsible for the aldol cleavage of indoleglycerol phosphate to indole and glyceraldehyde 3-phosphate. The polypeptide is Tryptophan synthase alpha chain (Methanoregula boonei (strain DSM 21154 / JCM 14090 / 6A8)).